We begin with the raw amino-acid sequence, 192 residues long: Pyridoxal 5'-phosphate synthase subunit PdxT (192 aa).

46–48 (GES) provides a ligand contact to L-glutamine. C78 (nucleophile) is an active-site residue. L-glutamine is bound by residues R106 and 135-136 (IR). Catalysis depends on charge relay system residues H171 and E173.

It belongs to the glutaminase PdxT/SNO family. In terms of assembly, in the presence of PdxS, forms a dodecamer of heterodimers. Only shows activity in the heterodimer.

It carries out the reaction aldehydo-D-ribose 5-phosphate + D-glyceraldehyde 3-phosphate + L-glutamine = pyridoxal 5'-phosphate + L-glutamate + phosphate + 3 H2O + H(+). The enzyme catalyses L-glutamine + H2O = L-glutamate + NH4(+). It functions in the pathway cofactor biosynthesis; pyridoxal 5'-phosphate biosynthesis. Functionally, catalyzes the hydrolysis of glutamine to glutamate and ammonia as part of the biosynthesis of pyridoxal 5'-phosphate. The resulting ammonia molecule is channeled to the active site of PdxS. The polypeptide is Pyridoxal 5'-phosphate synthase subunit PdxT (Kosmotoga olearia (strain ATCC BAA-1733 / DSM 21960 / TBF 19.5.1)).